We begin with the raw amino-acid sequence, 522 residues long: F-box only protein 7 (522 aa).

Disordered stretches follow at residues 1–20 (MKLRVRLQKRTQPLEVPESE) and 85–128 (PNLP…HGQV). The segment at 1 to 88 (MKLRVRLQKR…EDEMPAPNLP (88 aa)) is ubiquitin-like. Residues 87–114 (LPSSTDSEHSSLQNNDQPPLAATSSQAN) show a composition bias toward polar residues. The interval 92-129 (DSEHSSLQNNDQPPLAATSSQANIPDEQGSDSSHGQVT) is important for interaction with PINK1. Residues 129 to 169 (TQYDAWTDDSMEGPSHSAEAVSIQDAMSVEEASGFHPLEPM) form an important for interaction with CDK6 region. Residues 180–324 (PHSLEALYQS…PLLAFTRQVL (145 aa)) are important for dimerization and interaction with PSMF1. The 47-residue stretch at 329 to 375 (VFGLVVLPLELKLRIFRLLDVHSVLALSAVCHDLLIASNDPLLWRCL) folds into the F-box domain. The tract at residues 381–522 (RDSTIRGPDT…RSADNRLPYL (142 aa)) is important for interaction with CDK6. Omega-N-methylarginine is present on residues Arg431 and Arg451. Residues 459–522 (DPVTSLIPRP…RSADNRLPYL (64 aa)) form a disordered region. The RFDP motif motif lies at 481-484 (RFDP). Arg518 bears the Asymmetric dimethylarginine mark.

As to quaternary structure, part of the SCF (SKP1-CUL1-F-box) E3 ubiquitin-protein ligase complex SCF(FBXO7) formed of CUL1, SKP1, RBX1 and FBXO7. Interacts via its C-terminal proline-rich region with DLGAP5. Interacts with BIRC2. Interacts with CDK6 and promotes its interaction with D-type cyclin. Interacts (via the N-terminal Ubl domain) with PRKN. Interacts (via N-terminal region) with PINK1. Interacts with PSMF1.

Its subcellular location is the cytoplasm. The protein resides in the nucleus. The protein localises to the mitochondrion. It localises to the cytosol. It functions in the pathway protein modification; protein ubiquitination. Substrate recognition component of a SCF (SKP1-CUL1-F-box protein) E3 ubiquitin-protein ligase complex which mediates the ubiquitination and subsequent proteasomal degradation of target proteins and plays a role in several biological processes such as cell cycle, cell proliferation, or maintenance of chromosome stability. Recognizes and ubiquitinates BIRC2 and the cell cycle regulator DLGAP5. Plays a role downstream of PINK1 in the clearance of damaged mitochondria via selective autophagy (mitophagy) by targeting PRKN to dysfunctional depolarized mitochondria. Promotes MFN1 ubiquitination. Mediates the ubiquitination and proteasomal degradation of UXT isoform 2, thereby impairing the NF-kappa-B signaling pathway. Inhibits NF-kappa-B pathway also by promoting the ubiquitinatioin of TRAF2. Affects the assembly state and activity of the proteasome in the cells including neurons by ubiquitinating the proteasomal subunit PSMA2 via 'Lys-63'-linked polyubiquitin chains. Promotes 'Lys-48'-linked polyubiquitination SIRT7, leading to the hydrogen peroxide-induced cell death. The protein is F-box only protein 7 (Fbxo7) of Rattus norvegicus (Rat).